Reading from the N-terminus, the 248-residue chain is Exosome complex component Rrp41 (248 aa).

Belongs to the RNase PH family. Rrp41 subfamily. Component of the archaeal exosome complex. Forms a hexameric ring-like arrangement composed of 3 Rrp41-Rrp42 heterodimers. The hexameric ring associates with a trimer of Rrp4 and/or Csl4 subunits.

Its subcellular location is the cytoplasm. In terms of biological role, catalytic component of the exosome, which is a complex involved in RNA degradation. Has 3'-&gt;5' exoribonuclease activity. Can also synthesize heteromeric RNA-tails. The polypeptide is Exosome complex component Rrp41 (Thermoplasma acidophilum (strain ATCC 25905 / DSM 1728 / JCM 9062 / NBRC 15155 / AMRC-C165)).